A 321-amino-acid polypeptide reads, in one-letter code: Ribose-phosphate pyrophosphokinase (321 aa).

ATP-binding positions include 44–46 (DGE) and 103–104 (RQ). Residues His137 and Asp179 each contribute to the Mg(2+) site. Lys202 is an active-site residue. Residues Arg204, Asp228, and 232 to 236 (DTAGT) each bind D-ribose 5-phosphate.

Belongs to the ribose-phosphate pyrophosphokinase family. Class I subfamily. In terms of assembly, homohexamer. The cofactor is Mg(2+).

It localises to the cytoplasm. It carries out the reaction D-ribose 5-phosphate + ATP = 5-phospho-alpha-D-ribose 1-diphosphate + AMP + H(+). It functions in the pathway metabolic intermediate biosynthesis; 5-phospho-alpha-D-ribose 1-diphosphate biosynthesis; 5-phospho-alpha-D-ribose 1-diphosphate from D-ribose 5-phosphate (route I): step 1/1. In terms of biological role, involved in the biosynthesis of the central metabolite phospho-alpha-D-ribosyl-1-pyrophosphate (PRPP) via the transfer of pyrophosphoryl group from ATP to 1-hydroxyl of ribose-5-phosphate (Rib-5-P). The protein is Ribose-phosphate pyrophosphokinase of Staphylococcus saprophyticus subsp. saprophyticus (strain ATCC 15305 / DSM 20229 / NCIMB 8711 / NCTC 7292 / S-41).